A 54-amino-acid chain; its full sequence is UPF0391 membrane protein R00741 (54 aa).

2 consecutive transmembrane segments (helical) span residues 5–25 and 30–50; these read ALVF…GIAG and IAQV…VAGL.

The protein belongs to the UPF0391 family.

It localises to the cell membrane. The sequence is that of UPF0391 membrane protein R00741 from Rhizobium meliloti (strain 1021) (Ensifer meliloti).